The chain runs to 233 residues: Small ribosomal subunit protein uS2c (233 aa).

It belongs to the universal ribosomal protein uS2 family.

It localises to the plastid. Its subcellular location is the chloroplast. This is Small ribosomal subunit protein uS2c (rps2) from Galdieria sulphuraria (Red alga).